An 806-amino-acid polypeptide reads, in one-letter code: NADH:(hydroxy)cinnamate reductase subunit CrdB (806 aa).

Ser-257 carries the post-translational modification FMN phosphoryl serine. Ala-310, Glu-329, Asn-337, Thr-338, Gly-342, Gly-343, and Asp-576 together coordinate FAD. Residue Arg-635 is the Proton donor of the active site. Residues His-742, Glu-771, Ala-786, and Leu-787 each coordinate FAD.

Belongs to the FAD-dependent oxidoreductase 2 family. FRD/SDH subfamily. NADH:(hydroxy)cinnamate reductase Crd is a heterodimer composed of CrdA and CrdB subunits, encoded by adjacent genes. FAD serves as cofactor. FMN is required as a cofactor. Is flavinylated on Ser-257 by ApbE, encoded in a neighboring gene. Covalent attachment of FMN is essential for catalytic activity.

It carries out the reaction 3-phenylpropanoate + NAD(+) = (E)-cinnamate + NADH + H(+). The catalysed reaction is 3-(3,4-dihydroxyphenyl)propanoate + NAD(+) = (E)-caffeate + NADH + H(+). The enzyme catalyses phloretate + NAD(+) = (E)-4-coumarate + NADH + H(+). It catalyses the reaction dihydroferulate + NAD(+) = (E)-ferulate + NADH + H(+). Is inactivated by molecular oxygen, allowing regulation of Crd activity by medium oxygen level. Its function is as follows. Component of the NADH:(hydroxy)cinnamate reductase Crd that catalyzes the reduction of the double bond in cinnamate, p-coumarate, caffeate, and ferulate under anaerobic conditions with NADH or methyl viologen as the electron donor. Is moderately active against acrylate and practically inactive against urocanate, fumarate, methacrylate and crotonate. CrdB is the catalytic subunit that binds substrates. Is likely involved in protecting V.ruber from (hydroxy)cinnamate poisoning. The polypeptide is NADH:(hydroxy)cinnamate reductase subunit CrdB (Vibrio ruber (strain DSM 16370 / JCM 11486 / BCRC 17186 / CECT 7878 / LMG 23124 / VR1)).